The sequence spans 22 residues: Large ribosomal subunit protein bL32 (22 aa).

Residues 1-22 (CVPKRKVSPSXRNMRXAHDXLT) form a disordered region.

It belongs to the bacterial ribosomal protein bL32 family.

This Brevundimonas vesicularis (Pseudomonas vesicularis) protein is Large ribosomal subunit protein bL32 (rpmF).